The chain runs to 196 residues: Large ribosomal subunit protein bL9 (196 aa).

Residues 172–196 (NESARPEAFFDPEAEIEQEEGEENA) are disordered. The segment covering 181–196 (FDPEAEIEQEEGEENA) has biased composition (acidic residues).

It belongs to the bacterial ribosomal protein bL9 family.

Functionally, binds to the 23S rRNA. The polypeptide is Large ribosomal subunit protein bL9 (Chelativorans sp. (strain BNC1)).